The sequence spans 92 residues: Non-specific lipid-transfer protein A (92 aa).

4 disulfides stabilise this stretch: C3/C51, C13/C28, C29/C74, and C49/C88.

It belongs to the plant LTP family.

Functionally, plant non-specific lipid-transfer proteins transfer phospholipids as well as galactolipids across membranes. May play a role in wax or cutin deposition in the cell walls of expanding epidermal cells and certain secretory tissues. The protein is Non-specific lipid-transfer protein A of Ricinus communis (Castor bean).